The following is a 32-amino-acid chain: Delta-actitoxin-Eqd1a (32 aa).

It belongs to the sea anemone short toxin (type III) family. In terms of processing, contains 4 disulfide bonds.

It is found in the secreted. The protein localises to the nematocyst. Its function is as follows. Binds specifically to sodium channels (Nav) of the axonal membrane of crayfish and prolongs the falling phase of the action potential. It also increases the maximum rates of rise of both action potential and resting potential. Is only active on crustaceans. In Entacmaea quadricolor (Bubble-tip anemone), this protein is Delta-actitoxin-Eqd1a.